Reading from the N-terminus, the 557-residue chain is ADP-ribosylation factor-binding protein GGA1 (557 aa).

Residues A29–P165 enclose the VHS domain. Residues E192–G317 form the GAT domain. T348 bears the Phosphothreonine mark. Phosphoserine occurs at positions 353, 357, 378, and 394. The GAE domain maps to A440–T556.

In terms of assembly, binds to ARF1 and ARF2.

Its subcellular location is the golgi apparatus. The protein resides in the trans-Golgi network. May play a role in the regulation of membrane traffic through the trans-Golgi network. The protein is ADP-ribosylation factor-binding protein GGA1 (GGA1) of Saccharomyces cerevisiae (strain ATCC 204508 / S288c) (Baker's yeast).